We begin with the raw amino-acid sequence, 244 residues long: MGRGPSIEARKNASDSKRGKIFTKIIRQIGVAARAGGGDPYNNPSLRVVIDKALASNMSKDVIERAIKKAIGEMEGVQYEEVRYEGYAPGGVAVIVDCLTDNRLRTVSDVRHAFSKCGGNMGAEGSVAFMFKRLGVLSYAHAIADEELITEAAIDAGAEDVMVYTQDDEIEVITTPEAFSRVKEEMAALGLMPYHAEITFRADSDIVVDGDTAIQVRKLLDILEDLDDVQDVYSNVDQVTLGKR.

This sequence belongs to the TACO1 family.

The protein localises to the cytoplasm. The sequence is that of Probable transcriptional regulatory protein Xfasm12_1059 from Xylella fastidiosa (strain M12).